A 176-amino-acid polypeptide reads, in one-letter code: Small ribosomal subunit protein uS5 (176 aa).

Residues 11 to 74 form the S5 DRBM domain; sequence LSEVLVDVNR…QAAKKRMMKV (64 aa).

Belongs to the universal ribosomal protein uS5 family. In terms of assembly, part of the 30S ribosomal subunit. Contacts proteins S4 and S8.

Functionally, with S4 and S12 plays an important role in translational accuracy. In terms of biological role, located at the back of the 30S subunit body where it stabilizes the conformation of the head with respect to the body. This chain is Small ribosomal subunit protein uS5, found in Rickettsia massiliae (strain Mtu5).